Reading from the N-terminus, the 639-residue chain is Probable serine/threonine-protein kinase DDB_G0282777 (639 aa).

A coiled-coil region spans residues 7–122; the sequence is LKENKESLKD…EDLKSIILTS (116 aa). Positions 233–588 constitute a Protein kinase domain; it reads MHMVGDIKKG…SNNNQNHTNI (356 aa). Residues 239–247 and K284 each bind ATP; that span reads IKKGSISSD. The active-site Proton acceptor is the D439. The segment at 601 to 639 is disordered; sequence NTLETSTTNPNTNTTTSDTNTSTTSTTNTNTTTSNTITA.

It belongs to the protein kinase superfamily. Ser/Thr protein kinase family.

The catalysed reaction is L-seryl-[protein] + ATP = O-phospho-L-seryl-[protein] + ADP + H(+). The enzyme catalyses L-threonyl-[protein] + ATP = O-phospho-L-threonyl-[protein] + ADP + H(+). The sequence is that of Probable serine/threonine-protein kinase DDB_G0282777 from Dictyostelium discoideum (Social amoeba).